Consider the following 426-residue polypeptide: Glutamate-1-semialdehyde 2,1-aminomutase (426 aa).

Lys-265 is subject to N6-(pyridoxal phosphate)lysine.

Belongs to the class-III pyridoxal-phosphate-dependent aminotransferase family. HemL subfamily. Pyridoxal 5'-phosphate serves as cofactor.

It localises to the cytoplasm. The enzyme catalyses (S)-4-amino-5-oxopentanoate = 5-aminolevulinate. Its pathway is porphyrin-containing compound metabolism; protoporphyrin-IX biosynthesis; 5-aminolevulinate from L-glutamyl-tRNA(Glu): step 2/2. The polypeptide is Glutamate-1-semialdehyde 2,1-aminomutase (Hyperthermus butylicus (strain DSM 5456 / JCM 9403 / PLM1-5)).